The chain runs to 140 residues: Large ribosomal subunit protein bL17 (140 aa).

The protein belongs to the bacterial ribosomal protein bL17 family. In terms of assembly, part of the 50S ribosomal subunit. Contacts protein L32.

The polypeptide is Large ribosomal subunit protein bL17 (Rhizobium etli (strain CIAT 652)).